The following is a 686-amino-acid chain: Endonuclease GajA (686 aa).

Positions 1–423 (MYLKSLKIYN…NYVTTKNNYT (423 aa)) are ATPase domain. 52–56 (NCGKT) lines the ATP pocket. The interval 463–599 (FFSDAIIFVE…TSFEEAFILT (137 aa)) is toprim domain. The a divalent metal cation site is built by Glu-472, Glu-476, Asp-559, and Glu-604.

In terms of assembly, homotetramer. Forms the core of the anti-phage defense complex. Interacts with GajB; 2 GajB dimers dock at opposite sides of the GajA complex to form a 4:4 GajA-GajB assembly (GajAB). GajAB interacts with Bacillus phage Phi3T Gad1 protein; this interaction forms a 4:4:8 GajAB-Gad1 complex and leads to GajAB inhibition. It depends on Mg(2+) as a cofactor.

Its function is as follows. Component of antiviral defense system Gabija type II, composed of GajA and GajB. Probably a nicking endonuclease that is strongly inhibited by physiological levels of nucleotides (NTP and dNTP). Expression of Gabija type II in B.subtilis (strain BEST7003) confers resistance to phages phi105, and SpBeta. During viral replication, when nucleotides are rapidly consumed, it is de-suppressed and degrades target DNA. This Bacillus cereus (strain HuB5-5) protein is Endonuclease GajA.